The sequence spans 130 residues: Small ribosomal subunit protein uS8 (130 aa).

This sequence belongs to the universal ribosomal protein uS8 family. In terms of assembly, part of the 30S ribosomal subunit.

In terms of biological role, one of the primary rRNA binding proteins, it binds directly to 16S rRNA central domain where it helps coordinate assembly of the platform of the 30S subunit. The sequence is that of Small ribosomal subunit protein uS8 from Pyrococcus furiosus (strain ATCC 43587 / DSM 3638 / JCM 8422 / Vc1).